The sequence spans 103 residues: N(4)-acetylcytidine amidohydrolase (103 aa).

In terms of domain architecture, ASCH spans 6-94 (ITFFQRFQND…IAEIYPNQTQ (89 aa)). K21 (proton acceptor) is an active-site residue. The active-site Nucleophile is the T24. Catalysis depends on E74, which acts as the Proton donor.

This sequence belongs to the N(4)-acetylcytidine amidohydrolase family.

It catalyses the reaction N(4)-acetylcytidine + H2O = cytidine + acetate + H(+). The enzyme catalyses N(4)-acetyl-2'-deoxycytidine + H2O = 2'-deoxycytidine + acetate + H(+). It carries out the reaction N(4)-acetylcytosine + H2O = cytosine + acetate + H(+). Catalyzes the hydrolysis of N(4)-acetylcytidine (ac4C). The protein is N(4)-acetylcytidine amidohydrolase (yqfB) of Salmonella typhi.